Reading from the N-terminus, the 415-residue chain is Probable disease resistance protein At5g66890 (415 aa).

The 36-residue stretch at 8-43 (SFDALPHNLRECFLDMASFLEDQRIIASTIIDLWSA) folds into the NB-ARC domain. LRR repeat units follow at residues 229–251 (SLEK…EDVS), 256–278 (SLQE…ISQV), 280–303 (SLKK…GDLR), 304–326 (DLET…IDRL), 328–351 (NLRF…GKLK), and 352–373 (KLEK…VKNL). Positions 239–260 (HVVDALNELEDVSETLQSLQEI) form a coiled coil.

Belongs to the disease resistance NB-LRR family.

Functionally, possible disease resistance protein. This chain is Probable disease resistance protein At5g66890, found in Arabidopsis thaliana (Mouse-ear cress).